A 400-amino-acid polypeptide reads, in one-letter code: Mu-type opioid receptor (400 aa).

Residues 1-68 (MDSSAVPTNA…CPPTGSPSMI (68 aa)) lie on the Extracellular side of the membrane. N-linked (GlcNAc...) asparagine glycosylation is found at N9, N12, N33, N40, and N48. Residues 69–93 (TAITIMALYSIVCVVGLFGNFLVMY) form a helical membrane-spanning segment. The Cytoplasmic segment spans residues 94-106 (VIVRYTKMKTATN). A helical transmembrane segment spans residues 107–131 (IYIFNLALADALVTSTLPFQSVNYL). At 132–142 (MGTWPFGTILC) the chain is on the extracellular side. C142 and C219 are disulfide-bonded. A helical membrane pass occupies residues 143–165 (KIVISIDYYNMSTSIFTLCTMSV). The Cytoplasmic portion of the chain corresponds to 166–185 (DRYIAVCHPVKALDFRTPRN). A Phosphotyrosine modification is found at Y168. The chain crosses the membrane as a helical span at residues 186–207 (AKIINVCNWILSSAIGLPVMFM). The Extracellular segment spans residues 208–230 (ATTKYRQGSIDCTLTFSHPSWYW). Residues 231–255 (ENLLKICVFIFAFIMPVLIITVCYG) form a helical membrane-spanning segment. At 256 to 283 (LMILRLKSVRMLSGSKEKDRNLRRITRM) the chain is on the cytoplasmic side. A helical membrane pass occupies residues 284–306 (VLVVVAVFIICWTPIHIYVIIKA). Topologically, residues 307–314 (LVTIPETT) are extracellular. Residues 315-338 (FQTVSWHFCIALGYTNSCLNPVLY) form a helical membrane-spanning segment. Residues 334 to 338 (NPVLY) carry the NPxxY; plays a role in stabilizing the activated conformation of the receptor motif. Residues 339–400 (AFLDEDFKRC…NLEAETAPLP (62 aa)) lie on the Cytoplasmic side of the membrane. C353 is lipidated: S-palmitoyl cysteine. Residues 364 to 386 (NSTRIRQNTRDHPSTANTVDRTN) are disordered. At S365 the chain carries Phosphoserine. T372 is subject to Phosphothreonine. The residue at position 377 (S377) is a Phosphoserine. T396 is subject to Phosphothreonine.

This sequence belongs to the G-protein coupled receptor 1 family. Forms homooligomers and heterooligomers with other GPCRs, such as OPRD1, OPRK1, OPRL1, NPFFR2, ADRA2A, SSTR2, CNR1 and CCR5 (probably in dimeric forms). Interacts with heterotrimeric G proteins; interaction with a heterotrimeric complex containing GNAI1, GNB1 and GNG2 stabilizes the active conformation of the receptor and increases its affinity for endomorphin-2, the synthetic opioid peptide DAMGO and for morphinan agonists. Interacts with PPL; the interaction disrupts agonist-mediated G-protein activation. Interacts (via C-terminus) with DNAJB4 (via C-terminus). Interacts with calmodulin; the interaction inhibits the constitutive activity of OPRM1; it abolishes basal and attenuates agonist-stimulated G-protein coupling. Interacts with FLNA, PLD2, RANBP9 and WLS and GPM6A. Interacts with RTP4. Interacts with SYP and GNAS. Interacts with RGS9, RGS17, RGS20, RGS4, PPP1R9B and HINT1. Post-translationally, phosphorylated. Differentially phosphorylated in basal and agonist-induced conditions. Agonist-mediated phosphorylation modulates receptor internalization. Phosphorylated by GRK2 in a agonist-dependent manner. Phosphorylation at Tyr-168 requires receptor activation, is dependent on non-receptor protein tyrosine kinase Src and results in a decrease in agonist efficacy by reducing G-protein coupling efficiency. Phosphorylated on tyrosine residues; the phosphorylation is involved in agonist-induced G-protein-independent receptor down-regulation. Phosphorylation at Ser-377 is involved in G-protein-dependent but not beta-arrestin-dependent activation of the ERK pathway. Ubiquitinated. A basal ubiquitination seems not to be related to degradation. Ubiquitination is increased upon formation of OPRM1:OPRD1 oligomers leading to proteasomal degradation; the ubiquitination is diminished by RTP4.

The protein resides in the cell membrane. The protein localises to the cell projection. Its subcellular location is the axon. It is found in the perikaryon. It localises to the dendrite. The protein resides in the endosome. Its function is as follows. Receptor for endogenous opioids such as beta-endorphin and endomorphin. Receptor for natural and synthetic opioids including morphine, heroin, DAMGO, fentanyl, etorphine, buprenorphin and methadone. Also activated by enkephalin peptides, such as Met-enkephalin or Met-enkephalin-Arg-Phe, with higher affinity for Met-enkephalin-Arg-Phe. Agonist binding to the receptor induces coupling to an inactive GDP-bound heterotrimeric G-protein complex and subsequent exchange of GDP for GTP in the G-protein alpha subunit leading to dissociation of the G-protein complex with the free GTP-bound G-protein alpha and the G-protein beta-gamma dimer activating downstream cellular effectors. The agonist- and cell type-specific activity is predominantly coupled to pertussis toxin-sensitive G(i) and G(o) G alpha proteins, GNAI1, GNAI2, GNAI3 and GNAO1, and to a lesser extent to pertussis toxin-insensitive G alpha proteins GNAZ and GNA15. They mediate an array of downstream cellular responses, including inhibition of adenylate cyclase activity and both N-type and L-type calcium channels, activation of inward rectifying potassium channels, mitogen-activated protein kinase (MAPK), phospholipase C (PLC), phosphoinositide/protein kinase (PKC), phosphoinositide 3-kinase (PI3K) and regulation of NF-kappa-B. Also couples to adenylate cyclase stimulatory G alpha proteins. The selective temporal coupling to G-proteins and subsequent signaling can be regulated by RGSZ proteins, such as RGS9, RGS17 and RGS4. Phosphorylation by members of the GPRK subfamily of Ser/Thr protein kinases and association with beta-arrestins is involved in short-term receptor desensitization. Beta-arrestins associate with the GPRK-phosphorylated receptor and uncouple it from the G-protein thus terminating signal transduction. The phosphorylated receptor is internalized through endocytosis via clathrin-coated pits which involves beta-arrestins. The activation of the ERK pathway occurs either in a G-protein-dependent or a beta-arrestin-dependent manner and is regulated by agonist-specific receptor phosphorylation. Acts as a class A G-protein coupled receptor (GPCR) which dissociates from beta-arrestin at or near the plasma membrane and undergoes rapid recycling. Receptor down-regulation pathways are varying with the agonist and occur dependent or independent of G-protein coupling. Endogenous ligands induce rapid desensitization, endocytosis and recycling. Heterooligomerization with other GPCRs can modulate agonist binding, signaling and trafficking properties. Involved in neurogenesis. The polypeptide is Mu-type opioid receptor (OPRM1) (Macaca mulatta (Rhesus macaque)).